We begin with the raw amino-acid sequence, 154 residues long: 6,7-dimethyl-8-ribityllumazine synthase (154 aa).

Residues Phe-24, Ser-56–Glu-58, and Ala-80–Val-82 each bind 5-amino-6-(D-ribitylamino)uracil. (2S)-2-hydroxy-3-oxobutyl phosphate is bound at residue Glu-85–Thr-86. His-88 acts as the Proton donor in catalysis. A 5-amino-6-(D-ribitylamino)uracil-binding site is contributed by Phe-113. (2S)-2-hydroxy-3-oxobutyl phosphate is bound at residue Arg-127.

It belongs to the DMRL synthase family.

The catalysed reaction is (2S)-2-hydroxy-3-oxobutyl phosphate + 5-amino-6-(D-ribitylamino)uracil = 6,7-dimethyl-8-(1-D-ribityl)lumazine + phosphate + 2 H2O + H(+). Its pathway is cofactor biosynthesis; riboflavin biosynthesis; riboflavin from 2-hydroxy-3-oxobutyl phosphate and 5-amino-6-(D-ribitylamino)uracil: step 1/2. Catalyzes the formation of 6,7-dimethyl-8-ribityllumazine by condensation of 5-amino-6-(D-ribitylamino)uracil with 3,4-dihydroxy-2-butanone 4-phosphate. This is the penultimate step in the biosynthesis of riboflavin. In Thermococcus gammatolerans (strain DSM 15229 / JCM 11827 / EJ3), this protein is 6,7-dimethyl-8-ribityllumazine synthase.